A 437-amino-acid polypeptide reads, in one-letter code: Epsilon-sarcoglycan (437 aa).

Topologically, residues 1–317 (MQLPRWWELG…LKSRDYYTDF (317 aa)) are extracellular. N-linked (GlcNAc...) asparagine glycosylation is present at Asn200. Residues 318–338 (LITLAVPSAVALVLFLILAYI) form a helical membrane-spanning segment. Topologically, residues 339–437 (MCCRREGVEK…QQQTTGKWYP (99 aa)) are cytoplasmic.

The protein belongs to the sarcoglycan alpha/epsilon family. N-glycosylated. Post-translationally, ubiquitinated, leading to its degradation by the proteasome. Ubiquitous.

The protein localises to the cell membrane. It localises to the sarcolemma. Its subcellular location is the cytoplasm. It is found in the cytoskeleton. The protein resides in the cell projection. The protein localises to the dendrite. It localises to the golgi apparatus. In terms of biological role, component of the sarcoglycan complex, a subcomplex of the dystrophin-glycoprotein complex which forms a link between the F-actin cytoskeleton and the extracellular matrix. This Homo sapiens (Human) protein is Epsilon-sarcoglycan (SGCE).